The chain runs to 998 residues: Bifunctional glutamine synthetase adenylyltransferase/adenylyl-removing enzyme (998 aa).

An adenylyl removase region spans residues methionine 1–leucine 487. The segment at glycine 492–serine 998 is adenylyl transferase.

It belongs to the GlnE family. The cofactor is Mg(2+).

It carries out the reaction [glutamine synthetase]-O(4)-(5'-adenylyl)-L-tyrosine + phosphate = [glutamine synthetase]-L-tyrosine + ADP. The enzyme catalyses [glutamine synthetase]-L-tyrosine + ATP = [glutamine synthetase]-O(4)-(5'-adenylyl)-L-tyrosine + diphosphate. Involved in the regulation of glutamine synthetase GlnA, a key enzyme in the process to assimilate ammonia. When cellular nitrogen levels are high, the C-terminal adenylyl transferase (AT) inactivates GlnA by covalent transfer of an adenylyl group from ATP to specific tyrosine residue of GlnA, thus reducing its activity. Conversely, when nitrogen levels are low, the N-terminal adenylyl removase (AR) activates GlnA by removing the adenylyl group by phosphorolysis, increasing its activity. The regulatory region of GlnE binds the signal transduction protein PII (GlnB) which indicates the nitrogen status of the cell. The chain is Bifunctional glutamine synthetase adenylyltransferase/adenylyl-removing enzyme from Mycobacterium avium (strain 104).